The primary structure comprises 448 residues: MRKTHINVIGAGLAGSEAAYQIAKRGIPVKLYEMRGLKQTPQHKTDKFAELVCSNSLRGAAITNAVGLLKEEMRRLDSVIIKAAEYTQVPAGGALAVDREGFSDFVTKEVSNHPLVEVIREEITEIPQDELTIIATGPLTSDNLANKIREFNGADGFYFYDAAAPIIDANSINFDKVYKKSRYDKGEADYINCPMTKEEFQAFQEALISAEEAPLNSFEDLKVFEGCMPIEEMAKRGYKTMLFGPMKPVGLEYPDEYKGPRDGEFRTPYAVVQLRQDNASASLYNIVGFQTHLKWGEQKRVFQMIPGLENAEFVRYGVMHRNSYMDSPNLLKQTFQSRKQENLFFAGQMTGVEGYVESAASGLVAGINAAKLFNDEEVVIFPKITAIGSLPYYITHTDSKHFQPMNVTFGIVEELDGPRIRDKKERYTKVAERSLNTLTDIISKENLA.

Residue 10–15 (GAGLAG) participates in FAD binding.

The protein belongs to the MnmG family. TrmFO subfamily. FAD is required as a cofactor.

Its subcellular location is the cytoplasm. The enzyme catalyses uridine(54) in tRNA + (6R)-5,10-methylene-5,6,7,8-tetrahydrofolate + NADH + H(+) = 5-methyluridine(54) in tRNA + (6S)-5,6,7,8-tetrahydrofolate + NAD(+). It catalyses the reaction uridine(54) in tRNA + (6R)-5,10-methylene-5,6,7,8-tetrahydrofolate + NADPH + H(+) = 5-methyluridine(54) in tRNA + (6S)-5,6,7,8-tetrahydrofolate + NADP(+). Catalyzes the folate-dependent formation of 5-methyl-uridine at position 54 (M-5-U54) in all tRNAs. The chain is Methylenetetrahydrofolate--tRNA-(uracil-5-)-methyltransferase TrmFO from Lactococcus lactis subsp. cremoris (strain MG1363).